The chain runs to 370 residues: Putative agmatine deiminase (370 aa).

Cysteine 361 serves as the catalytic Amidino-cysteine intermediate.

The protein belongs to the agmatine deiminase family.

It carries out the reaction agmatine + H2O = N-carbamoylputrescine + NH4(+). This is Putative agmatine deiminase from Shewanella putrefaciens (strain CN-32 / ATCC BAA-453).